The sequence spans 226 residues: MLSMFMCNNIVDYVDDIDNGIVQDIEDEASNNVDHDYVYPLPENMVYRFDKSTNILDYLSTERDHVMMAVRYYMSKQRLDDLYRQLPTKTRSYIDIINIYCDKVSNDYNRDMNIMYDMASTKSFTVYDINNEVNTILMDNKGLGVRLATISFITELGRRCMNPVETIKMFTLLSHTICDDYFVDYITDISPPDNTIPNTSTREYLKLIGITAIMFATYKTLKYMIG.

The interval 32–37 (NVDHDY) is essential and sufficient to inhibit host NLRP1.

The protein belongs to the orthopoxvirus OPG045 family. Homodimer. Interacts with host pro-apoptotic protein BCL2L11 (via BH3 domain). Interacts with host NLRP1. Interacts with host BAK.

It is found in the host mitochondrion outer membrane. It localises to the host cytoplasm. Plays a role in evading host innate immune response by inhibiting host inflammasome activation. Interacts with and inhibits NLR-mediated interleukin-1 beta/IL1B production in infected cells. At the host mitochondria outer membrane, interacts with the BH3 domain of host BAK and prevents BAK from binding active BAX. In turn, host apoptosis is inhibited. This chain is Apoptosis regulator OPG045 (OPG045), found in Vaccinia virus (strain Western Reserve) (VACV).